The chain runs to 180 residues: NADH-quinone oxidoreductase subunit I (180 aa).

4Fe-4S ferredoxin-type domains lie at 50–80 (LTRD…LQKA) and 90–119 (EFFR…MTPD). [4Fe-4S] cluster contacts are provided by C60, C63, C66, C70, C99, C102, C105, and C109.

Belongs to the complex I 23 kDa subunit family. In terms of assembly, NDH-1 is composed of 14 different subunits. Subunits NuoA, H, J, K, L, M, N constitute the membrane sector of the complex. [4Fe-4S] cluster is required as a cofactor.

Its subcellular location is the cell inner membrane. It catalyses the reaction a quinone + NADH + 5 H(+)(in) = a quinol + NAD(+) + 4 H(+)(out). Functionally, NDH-1 shuttles electrons from NADH, via FMN and iron-sulfur (Fe-S) centers, to quinones in the respiratory chain. The immediate electron acceptor for the enzyme in this species is believed to be ubiquinone. Couples the redox reaction to proton translocation (for every two electrons transferred, four hydrogen ions are translocated across the cytoplasmic membrane), and thus conserves the redox energy in a proton gradient. The chain is NADH-quinone oxidoreductase subunit I from Acinetobacter baylyi (strain ATCC 33305 / BD413 / ADP1).